A 281-amino-acid chain; its full sequence is MTHQTHAYHMVNPSPWPLTGALSALLLTSGLIMWFHYNSSTLMFMGLTTMLLTMYQWWRDIIREGTFQGHHTPVVQKGLRYGMILFILSEVFFFIGFFWAFYHSSLAPTPELGGCWPPTGIHPLNPLEVPLLNTSILLASGVSITWAHHSLMEGNRKQMIQALLITISLGLYFTILQAMEYYEASFTISDGVYGSTFFVATGFHGLHVIIGSTFLIVCLLRQLFYHFTSTHHFGFEAAAWYWHFVDVVWLFLYVSIYWWGSYFSSMISTTDFQSLSSGSNQ.

Residues 1-15 (MTHQTHAYHMVNPSP) are Mitochondrial matrix-facing. Residues 16-34 (WPLTGALSALLLTSGLIMW) form a helical membrane-spanning segment. The Mitochondrial intermembrane segment spans residues 35–40 (FHYNSS). Residues 41 to 66 (TLMFMGLTTMLLTMYQWWRDIIREGT) traverse the membrane as a helical segment. The Mitochondrial matrix portion of the chain corresponds to 67–72 (FQGHHT). Residues 73–105 (PVVQKGLRYGMILFILSEVFFFIGFFWAFYHSS) form a helical membrane-spanning segment. The Mitochondrial intermembrane segment spans residues 106–128 (LAPTPELGGCWPPTGIHPLNPLE). The helical transmembrane segment at 129–152 (VPLLNTSILLASGVSITWAHHSLM) threads the bilayer. The Mitochondrial matrix portion of the chain corresponds to 153-155 (EGN). The helical transmembrane segment at 156–183 (RKQMIQALLITISLGLYFTILQAMEYYE) threads the bilayer. At 184-190 (ASFTISD) the chain is on the mitochondrial intermembrane side. The helical transmembrane segment at 191 to 223 (GVYGSTFFVATGFHGLHVIIGSTFLIVCLLRQL) threads the bilayer. At 224–232 (FYHFTSTHH) the chain is on the mitochondrial matrix side. The chain crosses the membrane as a helical span at residues 233–256 (FGFEAAAWYWHFVDVVWLFLYVSI). Topologically, residues 257 to 281 (YWWGSYFSSMISTTDFQSLSSGSNQ) are mitochondrial intermembrane.

It belongs to the cytochrome c oxidase subunit 3 family. In terms of assembly, component of the cytochrome c oxidase (complex IV, CIV), a multisubunit enzyme composed of 14 subunits. The complex is composed of a catalytic core of 3 subunits MT-CO1, MT-CO2 and MT-CO3, encoded in the mitochondrial DNA, and 11 supernumerary subunits COX4I, COX5A, COX5B, COX6A, COX6B, COX6C, COX7A, COX7B, COX7C, COX8 and NDUFA4, which are encoded in the nuclear genome. The complex exists as a monomer or a dimer and forms supercomplexes (SCs) in the inner mitochondrial membrane with NADH-ubiquinone oxidoreductase (complex I, CI) and ubiquinol-cytochrome c oxidoreductase (cytochrome b-c1 complex, complex III, CIII), resulting in different assemblies (supercomplex SCI(1)III(2)IV(1) and megacomplex MCI(2)III(2)IV(2)).

It localises to the mitochondrion inner membrane. The enzyme catalyses 4 Fe(II)-[cytochrome c] + O2 + 8 H(+)(in) = 4 Fe(III)-[cytochrome c] + 2 H2O + 4 H(+)(out). Component of the cytochrome c oxidase, the last enzyme in the mitochondrial electron transport chain which drives oxidative phosphorylation. The respiratory chain contains 3 multisubunit complexes succinate dehydrogenase (complex II, CII), ubiquinol-cytochrome c oxidoreductase (cytochrome b-c1 complex, complex III, CIII) and cytochrome c oxidase (complex IV, CIV), that cooperate to transfer electrons derived from NADH and succinate to molecular oxygen, creating an electrochemical gradient over the inner membrane that drives transmembrane transport and the ATP synthase. Cytochrome c oxidase is the component of the respiratory chain that catalyzes the reduction of oxygen to water. Electrons originating from reduced cytochrome c in the intermembrane space (IMS) are transferred via the dinuclear copper A center (CU(A)) of subunit 2 and heme A of subunit 1 to the active site in subunit 1, a binuclear center (BNC) formed by heme A3 and copper B (CU(B)). The BNC reduces molecular oxygen to 2 water molecules using 4 electrons from cytochrome c in the IMS and 4 protons from the mitochondrial matrix. This is Cytochrome c oxidase subunit 3 (MT-CO3) from Didelphis virginiana (North American opossum).